A 574-amino-acid polypeptide reads, in one-letter code: FAD-linked oxidoreductase sor8 (574 aa).

The signal sequence occupies residues 1–27 (MYAPPFVRAFGIAVLAVLPSFSSPATA). 7 N-linked (GlcNAc...) asparagine glycosylation sites follow: N58, N112, N136, N266, N312, N363, and N384. Residues 126–305 (VIGTYVQYAV…YSMTVKAHAN (180 aa)) form the FAD-binding PCMH-type domain.

It belongs to the oxygen-dependent FAD-linked oxidoreductase family. The cofactor is FAD.

The protein operates within secondary metabolite biosynthesis. FAD-linked oxidoreductase; part of the SOR gene cluster that mediates the biosynthesis of sorbicillinoids, a diverse group of yellow secondary metabolites that restrict growth of competing pathogenic fungi but not of bacteria. Sorbicillinoids biosynthesis requires the action of two PKSs. The SOR cluster is required for the production of trichodimerol and dihydrotrichotetronin, with sor2 being sufficient for production of trichodimerol, but not dihydrotrichotetronin in the light. Sor1 iteratively combines three acetyl units and the growing chain is modified by the ketoacyl reductase subunit, and optional by the enoyl reductase subunit in the second cycle. The polyketide is then handed over to the PKS sor2, which adds three more acetyl units, and two methyl groups. Sor2 releases an aldehyde, which undergoes spontaneous cyclization resulting in the formation of sorbicillin or 2',3'-dihydrosorbicillin. The monooxygenase sor5 oxidizes sorbicillin and 2',3'-dihydrosorbicillin to 2',3'-dihydrosorbicillinol and sorbicillinol, respectively. The oxidoreductase sor8 further converts sorbicillinol into oxosorbicillinol. Sorbicillinol is the building block for the other sorbicillinoids such as disorbicillinol, bisvertinolon, dihydrobisvertinolone, and dihydrotrichotetronine. The polypeptide is FAD-linked oxidoreductase sor8 (Hypocrea jecorina (strain QM6a) (Trichoderma reesei)).